Here is an 814-residue protein sequence, read N- to C-terminus: DNA replication licensing factor Mcm6 (814 aa).

Residues 152–179 (CLDCQTEIRDVEQQFKFTNPTICRNPVC) form a C4-type zinc finger. The region spanning 339 to 545 (LYQNLINSLF…VVDYAIARKI (207 aa)) is the MCM domain. ATP contacts are provided by S392, T393, A394, K395, S396, and N497. The short motif at 521–524 (SRFD) is the Arginine finger element. Residues R612 and E615 each coordinate ADP. Positions 656–696 (DIHLDEEEGEENENVMDIGEETPEDTPRTNETEENDQDTPA) are disordered. Residues 659–679 (LDEEEGEENENVMDIGEETPE) show a composition bias toward acidic residues.

Belongs to the MCM family. As to quaternary structure, component of the Mcm2-7 complex. The complex forms a toroidal hexameric ring with the proposed subunit order Mcm2-Mcm6-Mcm4-Mcm7-Mcm3-Mcm5 (By simililarity). The heterodimers of Mcm4/Mcm6 and Mcm3/Mcm5 interact with Mcm2 and Mcm7.

It localises to the nucleus. The catalysed reaction is ATP + H2O = ADP + phosphate + H(+). Functionally, acts as a component of the MCM2-7 complex (MCM complex) which is the replicative helicase essential for 'once per cell cycle' DNA replication initiation and elongation in eukaryotic cells. Core component of CDC45-MCM-GINS (CMG) helicase, the molecular machine that unwinds template DNA during replication, and around which the replisome is built. The active ATPase sites in the MCM2-7 ring are formed through the interaction surfaces of two neighboring subunits such that a critical structure of a conserved arginine finger motif is provided in trans relative to the ATP-binding site of the Walker A box of the adjacent subunit. The six ATPase active sites, however, are likely to contribute differentially to the complex helicase activity. In Anopheles gambiae (African malaria mosquito), this protein is DNA replication licensing factor Mcm6.